We begin with the raw amino-acid sequence, 214 residues long: MGQKTHPLGFRLGITQEHRSAWYADFKHYSTLLEEDDKIRTYLNKLAKLASISDIHINRNGLGDQIELNIETGRPGILVGDNGSGIKTLATNIKKFIPNNRQITINVVEVENVNANASLIADLVVQQLEDRVAFRRAIREALQCLQDNQVNGIKVEVSGRLNGAEMARSEWIREGRVPLQTLRADIDYATKEANTIYGVLGVKVWLFKNEILKK.

The region spanning 39 to 111 is the KH type-2 domain; that stretch reads IRTYLNKLAK…QITINVVEVE (73 aa).

It belongs to the universal ribosomal protein uS3 family. As to quaternary structure, part of the 30S ribosomal subunit.

The protein localises to the plastid. Its subcellular location is the chloroplast. The polypeptide is Small ribosomal subunit protein uS3c (rps3) (Thalassiosira pseudonana (Marine diatom)).